The chain runs to 399 residues: Probable F-box protein At4g22060 (399 aa).

One can recognise an F-box domain in the interval 12 to 48 (SWSKLPLDLLIMVFERLGFVDFQRTKSVCLAWLYASR).

The protein is Probable F-box protein At4g22060 of Arabidopsis thaliana (Mouse-ear cress).